A 301-amino-acid polypeptide reads, in one-letter code: Probable alpha-L-glutamate ligase (301 aa).

One can recognise an ATP-grasp domain in the interval 104–287 (LQLLARKGIG…VATKVIEFIE (184 aa)). ATP contacts are provided by residues Lys141, 178 to 179 (EF), Asp187, and 211 to 213 (RSN). Positions 248, 260, and 262 each coordinate Mg(2+). Positions 248, 260, and 262 each coordinate Mn(2+).

Belongs to the RimK family. It depends on Mg(2+) as a cofactor. The cofactor is Mn(2+).

This Nitrosococcus oceani (strain ATCC 19707 / BCRC 17464 / JCM 30415 / NCIMB 11848 / C-107) protein is Probable alpha-L-glutamate ligase.